We begin with the raw amino-acid sequence, 902 residues long: Probable polyribonucleotide nucleotidyltransferase 1, chloroplastic (902 aa).

Residues 1 to 66 constitute a chloroplast transit peptide; sequence MLATPGALHH…RRRAAGARVR (66 aa). Over residues 44 to 53 the composition is skewed to low complexity; the sequence is VAASASTSRR. Positions 44–93 are disordered; sequence VAASASTSRRGGARRRAAGARVRASVGEEAPPVVTEEASTSGGPTKFSTK. Over residues 80–91 the composition is skewed to polar residues; the sequence is EASTSGGPTKFS. The KH domain maps to 693 to 753; that stretch reads PLIHVMKVKP…SSLEKSKAII (61 aa). The S1 motif domain maps to 763-832; that stretch reads GEIYRNCEIK…DKGQLRLSSR (70 aa). The segment at 833-902 is disordered; it reads ALLPDANQES…ASQGSEMGTE (70 aa). Over residues 839–850 the composition is skewed to polar residues; that stretch reads NQESSSKQQAGG. Residues 852–862 show a composition bias toward basic and acidic residues; sequence TREKAPQKDNL. Positions 877-888 are enriched in low complexity; sequence EASTAENNATAS.

The protein belongs to the polyribonucleotide nucleotidyltransferase family.

The protein localises to the plastid. The protein resides in the chloroplast. It catalyses the reaction RNA(n+1) + phosphate = RNA(n) + a ribonucleoside 5'-diphosphate. Its function is as follows. Involved in the metabolism of all major classes of plastid RNAs. Required for efficient 3'-end processing of mRNAs and 3'-end maturation of rRNA transcripts, but is not sufficient to mediate their degradation. Mediates tRNA degradation. May function as a poly(A) mRNA 3'-5' degrading phosphorylase. The polypeptide is Probable polyribonucleotide nucleotidyltransferase 1, chloroplastic (PNP1) (Oryza sativa subsp. japonica (Rice)).